The primary structure comprises 296 residues: Stanniocalcin-2 (296 aa).

Residues 1–24 form the signal peptide; that stretch reads MCAERLGQFVTLALVFATLDPARG. The interval 22–44 is disordered; sequence ARGTDSTNPPEGPQDRGSQQKGR. A glycan (N-linked (GlcNAc...) asparagine) is linked at Asn-73. A disordered region spans residues 236 to 296; the sequence is RPYHRDTDHH…EQSEYSDIRR (61 aa). The span at 238 to 258 shows a compositional bias: basic and acidic residues; sequence YHRDTDHHLTANRGAKGERGS.

It belongs to the stanniocalcin family. Homodimer; disulfide-linked. In terms of tissue distribution, expressed in a variety of tissues. Strongly expressed in ovary and to a lesser extent in kidney.

The protein localises to the secreted. Has an anti-hypocalcemic action on calcium and phosphate homeostasis. In Rattus norvegicus (Rat), this protein is Stanniocalcin-2 (Stc2).